The sequence spans 124 residues: ATP synthase epsilon chain (124 aa).

It belongs to the ATPase epsilon chain family. In terms of assembly, F-type ATPases have 2 components, CF(1) - the catalytic core - and CF(0) - the membrane proton channel. CF(1) has five subunits: alpha(3), beta(3), gamma(1), delta(1), epsilon(1). CF(0) has three main subunits: a, b and c.

Its subcellular location is the cell membrane. In terms of biological role, produces ATP from ADP in the presence of a proton gradient across the membrane. The chain is ATP synthase epsilon chain from Streptomyces griseus subsp. griseus (strain JCM 4626 / CBS 651.72 / NBRC 13350 / KCC S-0626 / ISP 5235).